Consider the following 189-residue polypeptide: Peptidyl-tRNA hydrolase (189 aa).

Y14 provides a ligand contact to tRNA. The active-site Proton acceptor is H19. TRNA-binding residues include Y64, N66, and N112.

Belongs to the PTH family. As to quaternary structure, monomer.

The protein localises to the cytoplasm. It carries out the reaction an N-acyl-L-alpha-aminoacyl-tRNA + H2O = an N-acyl-L-amino acid + a tRNA + H(+). Hydrolyzes ribosome-free peptidyl-tRNAs (with 1 or more amino acids incorporated), which drop off the ribosome during protein synthesis, or as a result of ribosome stalling. In terms of biological role, catalyzes the release of premature peptidyl moieties from peptidyl-tRNA molecules trapped in stalled 50S ribosomal subunits, and thus maintains levels of free tRNAs and 50S ribosomes. This chain is Peptidyl-tRNA hydrolase, found in Clostridium botulinum (strain Loch Maree / Type A3).